Consider the following 180-residue polypeptide: MKLLILCVMVHGLLAEGPGQVLWKEQVVAPEFLLDDREDIASNRNAFFYEDKRSFRPEGLGEQVKRIAGAEDVGLQPRLVTRSLQCTCETEYEYRNLGEGHYPRYLTTSHCKPKACQNKFNSCRLLYYKVHILSQRDLNGLSDDRYSDDSETETPLPEALRHKWQLKPMKIPVACVPATG.

Positions 1-15 are cleaved as a signal peptide; that stretch reads MKLLILCVMVHGLLA. The propeptide occupies 16 to 64; the sequence is EGPGQVLWKEQVVAPEFLLDDREDIASNRNAFFYEDKRSFRPEGLGEQV. 2 disulfide bridges follow: cysteine 88/cysteine 123 and cysteine 111/cysteine 175.

In terms of assembly, homodimer; disulfide-linked.

Its subcellular location is the secreted. Functionally, PTTH is a brain secretory polypeptide of insects which stimulates the prothoracic glands to produce and release ecdysone, the steroid essential to insect development. In Camponotus floridanus (Florida carpenter ant), this protein is Prothoracicotropic hormone.